The primary structure comprises 581 residues: Chaotic nuclear migration protein 67 (581 aa).

Phosphoserine occurs at positions 17, 20, 72, 85, and 89. The disordered stretch occupies residues 86–150; it reads YQESPGLQER…PTDEHTSPDI (65 aa). A compositionally biased stretch (basic and acidic residues) spans 94–114; that stretch reads ERPKNEKDKSPIGTDVHKKDV. Ser151 carries the post-translational modification Phosphoserine. Coiled-coil stretches lie at residues 179–252, 306–363, and 373–451; these read LGYQ…DTIQ, FLCA…LSKQ, and KLTI…NTSE.

In terms of assembly, interacts directly with ADY3 and YOR129C. Interacts with ADY4. Probable component of a SPB complex composed of ADY3, SSP1, DON1, MPC54, SPO21/MPC70, NUD1 and CNM67. Post-translationally, phosphorylated in its N-terminal part.

The protein resides in the cytoplasm. It localises to the cytoskeleton. Its subcellular location is the microtubule organizing center. It is found in the spindle pole body. Functionally, involved in the pathway that organizes the shaping and sizing of the prospore membrane (PSM) during sporulation. Required for the proper formation of the spindle pole body (SPB) outer plaque. May connect the outer plaque to the central plaque embedded in the nuclear envelope. The polypeptide is Chaotic nuclear migration protein 67 (CNM67) (Saccharomyces cerevisiae (strain ATCC 204508 / S288c) (Baker's yeast)).